Reading from the N-terminus, the 383-residue chain is MPSGCRCLHLVCLLCILGAPGQPVRADDCSSHCDLAHGCCAPDGSCRCDPGWEGLHCERCVRMPGCQHGTCHQPWQCICHSGWAGKFCDKDEHICTTQSPCQNGGQCMYDGGGEYHCVCLPGFHGRDCERKAGPCEQAGSPCRNGGQCQDDQGFALNFTCRCLVGFVGARCEVNVDDCLMRPCANGATCLDGINRFSCLCPEGFAGRFCTINLDDCASRPCQRGARCRDRVHDFDCLCPSGYGGKTCELVLPVPDPPTTVDTPLGPTSAVVVPATGPAPHSAGAGLLRISVKEVVRRQEAGLGEPSLVALVVFGALTAALVLATVLLTLRAWRRGVCPPGPCCYPAPHYAPACQDQECQVSMLPAGLPLPRDLPPEPGKTTAL.

An N-terminal signal peptide occupies residues 1-26; the sequence is MPSGCRCLHLVCLLCILGAPGQPVRA. EGF-like domains are found at residues 27-58, 62-89, 91-129, and 131-172; these read DDCS…LHCE, RMPG…KFCD, DEHI…RDCE, and KAGP…ARCE. Residues 27-306 are Extracellular-facing; the sequence is DDCSSHCDLA…RQEAGLGEPS (280 aa). Cystine bridges form between Cys29/Cys40, Cys33/Cys46, Cys48/Cys57, Cys66/Cys71, Cys79/Cys88, Cys95/Cys107, Cys101/Cys117, Cys119/Cys128, Cys135/Cys148, Cys142/Cys160, Cys162/Cys171, Cys178/Cys189, Cys183/Cys198, Cys200/Cys209, Cys216/Cys227, Cys221/Cys236, and Cys238/Cys247. Asn157 carries an N-linked (GlcNAc...) asparagine glycan. The EGF-like 5; calcium-binding domain occupies 174 to 210; sequence NVDDCLMRPCANGATCLDGINRFSCLCPEGFAGRFCT. Residues 212–248 form the EGF-like 6; calcium-binding domain; the sequence is NLDDCASRPCQRGARCRDRVHDFDCLCPSGYGGKTCE. The chain crosses the membrane as a helical span at residues 307-327; that stretch reads LVALVVFGALTAALVLATVLL. Over 328 to 383 the chain is Cytoplasmic; it reads TLRAWRRGVCPPGPCCYPAPHYAPACQDQECQVSMLPAGLPLPRDLPPEPGKTTAL.

It localises to the membrane. Functionally, regulates adipogenesis. This chain is Protein delta homolog 2 (DLK2), found in Homo sapiens (Human).